A 185-amino-acid polypeptide reads, in one-letter code: Elongation factor P (185 aa).

This sequence belongs to the elongation factor P family.

It is found in the cytoplasm. Its pathway is protein biosynthesis; polypeptide chain elongation. Functionally, involved in peptide bond synthesis. Stimulates efficient translation and peptide-bond synthesis on native or reconstituted 70S ribosomes in vitro. Probably functions indirectly by altering the affinity of the ribosome for aminoacyl-tRNA, thus increasing their reactivity as acceptors for peptidyl transferase. The sequence is that of Elongation factor P from Finegoldia magna (strain ATCC 29328 / DSM 20472 / WAL 2508) (Peptostreptococcus magnus).